Consider the following 241-residue polypeptide: Putative inactive serine protease 58 (241 aa).

An N-terminal signal peptide occupies residues 1–17; the sequence is MKLAFLCILSTLLRTFA. Residues 18–239 enclose the Peptidase S1 domain; that stretch reads YNPDHIAGTT…YLPWIEDTMK (222 aa). Cys-41 and Cys-57 are oxidised to a cystine. Active-site charge relay system residues include His-56 and Asp-101. 3 disulfide bridges follow: Cys-133/Cys-201, Cys-165/Cys-180, and Cys-191/Cys-215. Residue Asn-156 is glycosylated (N-linked (GlcNAc...) asparagine).

Belongs to the peptidase S1 family.

The protein resides in the secreted. The catalysed reaction is Preferential cleavage: Arg-|-Xaa, Lys-|-Xaa.. The polypeptide is Putative inactive serine protease 58 (Prss58) (Mus musculus (Mouse)).